The chain runs to 151 residues: Deoxyuridine 5'-triphosphate nucleotidohydrolase (151 aa).

Residues 70–72, Asn83, 87–89, and Met97 contribute to the substrate site; these read RSG and LID.

This sequence belongs to the dUTPase family. Mg(2+) is required as a cofactor.

It carries out the reaction dUTP + H2O = dUMP + diphosphate + H(+). It functions in the pathway pyrimidine metabolism; dUMP biosynthesis; dUMP from dCTP (dUTP route): step 2/2. Its function is as follows. This enzyme is involved in nucleotide metabolism: it produces dUMP, the immediate precursor of thymidine nucleotides and it decreases the intracellular concentration of dUTP so that uracil cannot be incorporated into DNA. This chain is Deoxyuridine 5'-triphosphate nucleotidohydrolase, found in Pseudomonas putida (strain ATCC 700007 / DSM 6899 / JCM 31910 / BCRC 17059 / LMG 24140 / F1).